The sequence spans 131 residues: Arsenate reductase (131 aa).

Active-site nucleophile residues include Cys10, Cys82, and Cys89. 2 cysteine pairs are disulfide-bonded: Cys10–Cys82 and Cys82–Cys89.

Belongs to the low molecular weight phosphotyrosine protein phosphatase family. Thioredoxin-coupled ArsC subfamily.

It is found in the cytoplasm. It carries out the reaction arsenate + [thioredoxin]-dithiol + H(+) = arsenite + [thioredoxin]-disulfide + H2O. Its function is as follows. Catalyzes the reduction of arsenate [As(V)] to arsenite [As(III)]. This chain is Arsenate reductase, found in Staphylococcus xylosus.